We begin with the raw amino-acid sequence, 704 residues long: Boron transporter 1 (704 aa).

Over 1–35 (MEETFVPFEGIKNDLKGRLMCYKQDWTGGFKAGFR) the chain is Cytoplasmic. The helical transmembrane segment at 36 to 56 (ILAPTTYIFFASAIPVISFGE) threads the bilayer. Residues 57 to 75 (QLERSTDGVLTAVQTLAST) lie on the Extracellular side of the membrane. A helical transmembrane segment spans residues 76–96 (AICGMIHSIIGGQPLLILGVA). At 97–120 (EPTVIMYTFMFNFAKARPELGRDL) the chain is on the cytoplasmic side. A helical membrane pass occupies residues 121–141 (FLAWSGWVCVWTALMLFVLAI). Topologically, residues 142–155 (CGACSIINRFTRVA) are extracellular. The helical transmembrane segment at 156-176 (GELFGLLIAMLFMQQAIKGLV) threads the bilayer. At 177 to 195 (DEFRIPERENQKLKEFLPS) the chain is on the cytoplasmic side. A helical membrane pass occupies residues 196–216 (WRFANGMFALVLSFGLLLTGL). Residues 217–233 (RSRKARSWRYGTGWLRS) are Extracellular-facing. A helical transmembrane segment spans residues 234-254 (LIADYGVPLMVLVWTGVSYIP). The Cytoplasmic segment spans residues 255–289 (AGDVPKGIPRRLFSPNPWSPGAYGNWTVVKEMLDV). Residues 290–310 (PIVYIIGAFIPASMIAVLYYF) traverse the membrane as a helical segment. At 311–337 (DHSVASQLAQQKEFNLRKPSSYHYDLL) the chain is on the extracellular side. Residues 338–358 (LLGFLTLMCGLLGVPPSNGVI) form a helical membrane-spanning segment. Residues 359–480 (PQSPMHTKSL…STMVGGCVAA (122 aa)) are Cytoplasmic-facing. Residues 481-501 (MPILKMIPTSVLWGYFAFMAI) form a helical membrane-spanning segment. Over 502–557 (ESLPGNQFWERILLLFTAPSRRFKVLEDYHATFVETVPFKTIAMFTLFQTTYLLIC) the chain is Extracellular. The helical transmembrane segment at 558 to 578 (FGLTWIPIAGVMFPLMIMFLI) threads the bilayer. The Cytoplasmic portion of the chain corresponds to 579–704 (PVRQYLLPRF…RSPLNQSSSN (126 aa)). Residues 641 to 704 (EFRHTSSPKV…RSPLNQSSSN (64 aa)) form a disordered region. Residues 647-664 (SPKVTSSSSTPVNNRSLS) show a composition bias toward low complexity.

Belongs to the anion exchanger (TC 2.A.31.3) family. As to expression, expressed in proximal side of various root cells, notably in the columella, lateral root cap, epidermis and endodermis in tip and elongation zones of the root. Also detected in the epidermis, cortex, endodermis, and stele cells of the root hair zone. Observed in cotyledons and hypocotyls.

It is found in the cell membrane. The protein localises to the endosome membrane. It localises to the vacuole membrane. Its function is as follows. Efflux-type boron (B) transporter for xylem loading, responsive of boron translocation from roots to shoots under boron limitation. Boron is essential for maintaining the integrity of plants cell walls. The chain is Boron transporter 1 from Arabidopsis thaliana (Mouse-ear cress).